Consider the following 182-residue polypeptide: Ribosome-recycling factor (182 aa).

This sequence belongs to the RRF family.

Its subcellular location is the cytoplasm. In terms of biological role, responsible for the release of ribosomes from messenger RNA at the termination of protein biosynthesis. May increase the efficiency of translation by recycling ribosomes from one round of translation to another. This is Ribosome-recycling factor from Synechococcus sp. (strain CC9605).